The sequence spans 1277 residues: Myosin-1 (1277 aa).

Positions 1–13 (MAPSKKAGKKVTP) are enriched in basic residues. A disordered region spans residues 1–27 (MAPSKKAGKKVTPKKAAGNNAKSKVAK). The Myosin motor domain maps to 39-718 (VGVTDMTLLT…TLFALETMRD (680 aa)). ATP is bound at residue 132 to 139 (GESGAGKT). Serine 360 carries the phosphoserine modification. The actin-binding stretch occupies residues 407–489 (IIGILDIFGF…PGIFAALNDA (83 aa)). Residues 567 to 587 (LFPDRPDPNSKKRPPTASDRI) are disordered. 2 consecutive IQ domains span residues 722-742 (HNMAARIQRAFRNYMRYKHEC) and 743-768 (ARRIQRFWKNNKEALVYAQVRDYGHQ). The TH1 domain maps to 776-965 (RRRFSLLSYR…TVHVPSGEPA (190 aa)). Disordered stretches follow at residues 952-1072 (YKSH…AEPE) and 1129-1259 (PKAA…GPGQ). Low complexity predominate over residues 1015–1056 (PAVATPSVVSTPAAAAVVSKPKPAASTPAAVRAPAVTPAARS). Residues 1057-1068 (VPPPPPPPPPAR) are compositionally biased toward pro residues. The SH3 domain maps to 1071–1129 (PEKEMYRAKFDFQGQEGEMSLTKDDEVELIEKDENGWWLVKKDGVEAWAPYNYLERIAP). The span at 1132–1142 (APAPPPPPARP) shows a compositional bias: pro residues. Polar residues-rich tracts occupy residues 1145-1159 (TSTVPKPPLSSTTAD) and 1185-1197 (AATTDSTPNSSRP). Residues 1204 to 1224 (VPPPVAAKPKPPVVAPKPGVP) show a composition bias toward pro residues. The span at 1226-1240 (PGGKPALPTTARPAP) shows a compositional bias: low complexity. Positions 1241-1258 (SGGGAAAGRLGGGGGGPG) are enriched in gly residues.

Belongs to the TRAFAC class myosin-kinesin ATPase superfamily. Myosin family. Phosphorylation of the TEDS site (Ser-360) is required for the polarization of the actin cytoskeleton. Phosphorylation probably activates the myosin-I ATPase activity.

It is found in the cytoplasm. The protein resides in the cytoskeleton. Its subcellular location is the actin patch. In terms of biological role, type-I myosin implicated in the organization of the actin cytoskeleton. Required for proper actin cytoskeleton polarization. At the cell cortex, assembles in patch-like structures together with proteins from the actin-polymerizing machinery and promotes actin assembly. Functions as actin nucleation-promoting factor (NPF) for the Arp2/3 complex. The polypeptide is Myosin-1 (MYO1) (Coprinopsis cinerea (strain Okayama-7 / 130 / ATCC MYA-4618 / FGSC 9003) (Inky cap fungus)).